A 211-amino-acid chain; its full sequence is DNA dC-&gt;dU-editing enzyme APOBEC-3H (211 aa).

The CMP/dCMP-type deaminase domain maps to 4–126 (LTAKTFSLQF…RRQQEGLRLL (123 aa)). Position 54 (His54) interacts with Zn(2+). The active-site Proton donor is Glu56. 2 residues coordinate Zn(2+): Cys85 and Cys88.

Belongs to the cytidine and deoxycytidylate deaminase family. Homodimer. Zn(2+) is required as a cofactor.

Its subcellular location is the cytoplasm. It catalyses the reaction a 2'-deoxycytidine in single-stranded DNA + H2O + H(+) = a 2'-deoxyuridine in single-stranded DNA + NH4(+). Functionally, DNA deaminase (cytidine deaminase) which may act as an inhibitor of retrovirus replication and retrotransposon mobility via deaminase-dependent and -independent mechanisms. The chain is DNA dC-&gt;dU-editing enzyme APOBEC-3H from Pongo pygmaeus (Bornean orangutan).